Reading from the N-terminus, the 191-residue chain is Cytochrome c oxidase assembly protein CtaG (191 aa).

Over 1–9 (MALNGPQKT) the chain is Cytoplasmic. A helical; Signal-anchor for type II membrane protein membrane pass occupies residues 10–30 (VVQLVSVVVVMGGLAWASVPF). Residues 31–191 (YDWFCRVTGF…LDAGEKTNTN (161 aa)) lie on the Periplasmic side of the membrane.

It belongs to the COX11/CtaG family.

The protein localises to the cell inner membrane. Exerts its effect at some terminal stage of cytochrome c oxidase synthesis, probably by being involved in the insertion of the copper B into subunit I. This is Cytochrome c oxidase assembly protein CtaG from Ruegeria pomeroyi (strain ATCC 700808 / DSM 15171 / DSS-3) (Silicibacter pomeroyi).